The primary structure comprises 159 residues: Mesogenin-1 (159 aa).

A disordered region spans residues 79–101 (PGQARLPKGTKVRMSAQRRRKAS). Over residues 86 to 100 (KGTKVRMSAQRRRKA) the composition is skewed to basic residues. The bHLH domain occupies 95 to 149 (QRRRKASEREKLRMRTLADALHTLRNYLPPAYSQRGQPLTKIQTLKCTIKYISEL).

Its subcellular location is the nucleus. Involved in specifying the paraxial, but not dorsal, mesoderm. May regulate the expression of T-box transcription factors required for mesoderm formation and differentiation. The protein is Mesogenin-1 (MSGN1) of Gallus gallus (Chicken).